The chain runs to 136 residues: SNARE-associated protein Snapin (136 aa).

Alanine 2 carries the N-acetylalanine modification. At serine 10 the chain carries Phosphoserine. At threonine 14 the chain carries Phosphothreonine. The stretch at valine 37 to serine 126 forms a coiled coil. The residue at position 50 (serine 50) is a Phosphoserine; by PKA. Residues lysine 83–lysine 136 form an interaction with TOR1A region. Serine 126 is subject to Phosphoserine. Tyrosine 129 bears the Phosphotyrosine mark. The residue at position 133 (serine 133) is a Phosphoserine.

It belongs to the SNAPIN family. In terms of assembly, component of the biogenesis of lysosome-related organelles complex 1 (BLOC-1) composed of BLOC1S1, BLOC1S2, BLOC1S3, BLOC1S4, BLOC1S5, BLOC1S6, DTNBP1/BLOC1S7 and SNAPIN/BLOC1S8. Octamer composed of one copy each BLOC1S1, BLOC1S2, BLOC1S3, BLOC1S4, BLOC1S5, BLOC1S6, DTNBP1/BLOC1S7 and SNAPIN/BLOC1S8. The BLOC-1 complex associates with the AP-3 protein complex and membrane protein cargos. Component of the BLOC-one-related complex (BORC) which is composed of BLOC1S1, BLOC1S2, BORCS5, BORCS6, BORCS7, BORCS8, KXD1 and SNAPIN. Associates with the SNARE complex. Interacts with CSNK1D, SNAP23 and STX4A but not with STX1A, VAMP2 and SYT1. Interacts with SNAP25; the interaction with SNAP25 is increased by its phosphorylation. Interacts with CNTRL, NANOS1, PUM2 and RGS7. Interacts with TOR1A; the interaction is direct and associates SNAPIN with the CSN complex. (Microbial infection) Interacts with human cytomegalovirus/HHV-5 protein UL70. Phosphorylated by CSNK1D/CK1. Phosphorylated by PKD, phosphorylation controls SNAPIN protein stability. As to expression, expressed in male germ cells of adult testis (at protein level).

The protein resides in the membrane. It is found in the cytoplasm. It localises to the cytosol. The protein localises to the perinuclear region. Its subcellular location is the golgi apparatus membrane. The protein resides in the lysosome membrane. It is found in the cytoplasmic vesicle. It localises to the secretory vesicle. The protein localises to the synaptic vesicle membrane. Functionally, component of the BLOC-1 complex, a complex that is required for normal biogenesis of lysosome-related organelles (LRO), such as platelet dense granules and melanosomes. In concert with the AP-3 complex, the BLOC-1 complex is required to target membrane protein cargos into vesicles assembled at cell bodies for delivery into neurites and nerve terminals. The BLOC-1 complex, in association with SNARE proteins, is also proposed to be involved in neurite extension. Plays a role in intracellular vesicle trafficking and synaptic vesicle recycling. May modulate a step between vesicle priming, fusion and calcium-dependent neurotransmitter release through its ability to potentiate the interaction of synaptotagmin with the SNAREs and the plasma-membrane-associated protein SNAP25. Its phosphorylation state influences exocytotic protein interactions and may regulate synaptic vesicle exocytosis. May also have a role in the mechanisms of SNARE-mediated membrane fusion in non-neuronal cells. As part of the BORC complex may play a role in lysosomes movement and localization at the cell periphery. Associated with the cytosolic face of lysosomes, the BORC complex may recruit ARL8B and couple lysosomes to microtubule plus-end-directed kinesin motor. In Homo sapiens (Human), this protein is SNARE-associated protein Snapin (SNAPIN).